A 200-amino-acid polypeptide reads, in one-letter code: Proteasome subunit beta 2 (200 aa).

A propeptide spans 1-7 (removed in mature form; by autocatalysis); that stretch reads MEEKKTG. Thr-8 functions as the Nucleophile in the catalytic mechanism.

This sequence belongs to the peptidase T1B family. As to quaternary structure, the 20S proteasome core is composed of 14 alpha and 14 beta subunits that assemble into four stacked heptameric rings, resulting in a barrel-shaped structure. The two inner rings, each composed of seven catalytic beta subunits, are sandwiched by two outer rings, each composed of seven alpha subunits. The catalytic chamber with the active sites is on the inside of the barrel. Has a gated structure, the ends of the cylinder being occluded by the N-termini of the alpha-subunits. Is capped at one or both ends by the proteasome regulatory ATPase, PAN.

It is found in the cytoplasm. It carries out the reaction Cleavage of peptide bonds with very broad specificity.. The formation of the proteasomal ATPase PAN-20S proteasome complex, via the docking of the C-termini of PAN into the intersubunit pockets in the alpha-rings, triggers opening of the gate for substrate entry. Interconversion between the open-gate and close-gate conformations leads to a dynamic regulation of the 20S proteasome proteolysis activity. In terms of biological role, component of the proteasome core, a large protease complex with broad specificity involved in protein degradation. The chain is Proteasome subunit beta 2 from Thermococcus gammatolerans (strain DSM 15229 / JCM 11827 / EJ3).